The chain runs to 622 residues: Basal cell adhesion molecule (622 aa).

The signal sequence occupies residues 1-25 (MEPPDARAGLLWLTFLLSGYSGAQA). Ig-like V-type domains follow at residues 26-135 (ELHV…SSVR) and 140-250 (PEDT…HTFR). The Extracellular segment spans residues 26 to 541 (ELHVSVPPRV…GSVAPQTAQA (516 aa)). 3 cysteine pairs are disulfide-bonded: C47-C118, C165-C230, and C284-C330. Ig-like C2-type domains are found at residues 267–342 (PSTT…EEVQ), 356–435 (PLEL…QSFQ), and 442–532 (PELK…FHFG). N314, N323, N370, and N377 each carry an N-linked (GlcNAc...) asparagine glycan. Cystine bridges form between C378–C418 and C467–C516. A helical transmembrane segment spans residues 542 to 562 (GVAVMAVAVSVGLLLLVVAAF). The Cytoplasmic portion of the chain corresponds to 563 to 622 (YCMRRKGRPGCCRRAEKGAPPAREPELSHSGSERPEHTGLLMGGPSGGGRGGSGGFGDEC). Residues 574–622 (CRRAEKGAPPAREPELSHSGSERPEHTGLLMGGPSGGGRGGSGGFGDEC) are disordered. A compositionally biased stretch (basic and acidic residues) spans 575-599 (RRAEKGAPPAREPELSHSGSERPEH). 4 positions are modified to phosphoserine: S590, S592, S594, and S615. Residues 603-622 (LMGGPSGGGRGGSGGFGDEC) show a composition bias toward gly residues.

Homodimer. Interacts with ITGA4:ITGB1. Interacts with spectrins SPTA1 and SPTB1. Post-translationally, epinephrine-stimulated phosphorylation of Ser-615 by PKA enhances adhesion to laminin. Ser-615 can also be phosphorylated by AKT1.

Its subcellular location is the cell membrane. Its function is as follows. Transmembrane glycoprotein that functions as both a receptor and an adhesion molecule playing a crucial role in cell adhesion, motility, migration and invasion. Extracellular domain enables binding to extracellular matrix proteins, such as laminin, integrin and other ligands while its intracellular domain interacts with cytoskeletal proteins like hemoglobin, facilitating cell signal transduction. Serves as a receptor for laminin alpha-5/LAMA5 to promote cell adhesion. Mechanistically, JAK2 induces BCAM phosphorylation and activates its adhesion to laminin by stimulating a Rap1/AKT signaling pathway in the absence of EPOR. The chain is Basal cell adhesion molecule (Bcam) from Mus musculus (Mouse).